The sequence spans 427 residues: Alpha/beta hydrolase gkaG (427 aa).

Residue Asp-368 is part of the active site.

This sequence belongs to the AB hydrolase superfamily. In terms of assembly, homodimer.

It functions in the pathway mycotoxin biosynthesis. Alpha/beta hydrolase; part of the gene cluster that mediates the biosynthesis of GKK1032, fungal natural products containing a macrocyclic para-cyclophane connected to a decahydrofluorene ring system that show potent antitumor activities. Within the pathway, gkaG catalyzes the Knoevenagel condensation that affords the 3-pyrrolin-2-one ring, using as substrate the polyketide-tyrosyl acyl thioester product of gkaA. The pathway begins with the PKS-NRPS gkaA which, with the help of the trans-enoyl reductase gkaC, synthesizes the polyketide-tyrosyl acyl thioester product which can be reductively off-loaded by the terminal reductase (R) domain in gkaA. The alpha/beta hydrolase gkaG is then required to catalyze the subsequent Knoevenagel condensation that affords the 3-pyrrolin-2-one ring, whereas the three proteins gkaB, gkaX and gkaZ then function synergistically to form the cyclophane. In Penicillium citrinum, this protein is Alpha/beta hydrolase gkaG.